Here is a 70-residue protein sequence, read N- to C-terminus: DNA-directed RNA polymerases I, II, and III subunit RPABC4 (70 aa).

The Zn(2+) site is built by C31, C34, C48, and C51. The C4-type zinc finger occupies 31–51 (CAECSSKLSLSRTDAVRCKDC).

The protein belongs to the archaeal Rpo12/eukaryotic RPC10 RNA polymerase subunit family. In terms of assembly, component of the RNA polymerase I (Pol I), RNA polymerase II (Pol II) and RNA polymerase III (Pol III) complexes. Component of the RNA polymerase I (Pol I) complex consisting of 14 subunits: RPA135, RPA190, RPC40, RPA14, RPB5, RPO26, RPA43, RPB8, RPA12, RPB10, RPC19, RPC10, RPA49 and RPA34. The complex is composed of a horseshoe-shaped core containing ten subunits (RPA135, RPA190, RPB5, RPO26, RPB8, RPB10, RPC10, RPA12, RPC19 and RPC40) where RPA135 and RPA190 form the DNA-binding cleft. Outside of the core, RPA14 and RPA43 form the stalk that mediates interactions with transcription initiation factors and newly synthesized RNA. Component of the RNA polymerase II (Pol II) complex consisting of 12 subunits: RPO21, RPB2, RPB3, RPB4, RPB5, RPO26, RPB7, RPB8, RPB9, RPB10 and RPC10. Component of the RNA polymerase III (Pol III) complex consisting of 17 subunits. Interacts, via its C-terminus, with TFIIIC subunit TFC4. Post-translationally, the N-terminus is blocked.

It localises to the nucleus. The protein localises to the nucleolus. Its subcellular location is the peroxisome. In terms of biological role, DNA-dependent RNA polymerases catalyze the transcription of DNA into RNA using the four ribonucleoside triphosphates as substrates. Common component of RNA polymerases I, II and III which synthesize ribosomal RNA precursors, mRNA precursors and many functional non-coding RNAs, and a small RNAs, such as 5S rRNA and tRNAs, respectively. RNA polymerases are composed of mobile elements that move relative to each other. In Pol II, the core element with the central large cleft comprises RPB3, RBP10, RPB11, RPB12 and regions of RPB1 and RPB2 forming the active center. This is DNA-directed RNA polymerases I, II, and III subunit RPABC4 (RPC10) from Saccharomyces cerevisiae (strain ATCC 204508 / S288c) (Baker's yeast).